The chain runs to 308 residues: D-alanine--D-alanine ligase (308 aa).

Residues 103 to 302 (KTVMATAGVP…FDELVQWMVE (200 aa)) enclose the ATP-grasp domain. Residue 130–184 (MAPPYVIKPVADGSSVGVFMVTEAHEHPPQELFRDDWPHGEQLLVEKYVAGKELT) coordinates ATP. Asp252, Glu269, and Asn271 together coordinate Mg(2+).

The protein belongs to the D-alanine--D-alanine ligase family. Requires Mg(2+) as cofactor. Mn(2+) is required as a cofactor.

The protein resides in the cytoplasm. The catalysed reaction is 2 D-alanine + ATP = D-alanyl-D-alanine + ADP + phosphate + H(+). The protein operates within cell wall biogenesis; peptidoglycan biosynthesis. In terms of biological role, cell wall formation. The polypeptide is D-alanine--D-alanine ligase (Rhodopseudomonas palustris (strain BisB18)).